The primary structure comprises 189 residues: Probable nicotinate-nucleotide adenylyltransferase (189 aa).

Belongs to the NadD family.

The catalysed reaction is nicotinate beta-D-ribonucleotide + ATP + H(+) = deamido-NAD(+) + diphosphate. It participates in cofactor biosynthesis; NAD(+) biosynthesis; deamido-NAD(+) from nicotinate D-ribonucleotide: step 1/1. Functionally, catalyzes the reversible adenylation of nicotinate mononucleotide (NaMN) to nicotinic acid adenine dinucleotide (NaAD). The polypeptide is Probable nicotinate-nucleotide adenylyltransferase (Bacillus cereus (strain ATCC 10987 / NRS 248)).